A 546-amino-acid polypeptide reads, in one-letter code: Phosphomethylpyrimidine synthase (546 aa).

Substrate-binding positions include N145, M174, Y203, H239, 259–261, 300–303, and E339; these read SRG and DGLR. Position 343 (H343) interacts with Zn(2+). A substrate-binding site is contributed by Y366. Zn(2+) is bound at residue H407. Positions 487, 490, and 495 each coordinate [4Fe-4S] cluster.

The protein belongs to the ThiC family. [4Fe-4S] cluster serves as cofactor.

It carries out the reaction 5-amino-1-(5-phospho-beta-D-ribosyl)imidazole + S-adenosyl-L-methionine = 4-amino-2-methyl-5-(phosphooxymethyl)pyrimidine + CO + 5'-deoxyadenosine + formate + L-methionine + 3 H(+). It participates in cofactor biosynthesis; thiamine diphosphate biosynthesis. Functionally, catalyzes the synthesis of the hydroxymethylpyrimidine phosphate (HMP-P) moiety of thiamine from aminoimidazole ribotide (AIR) in a radical S-adenosyl-L-methionine (SAM)-dependent reaction. The chain is Phosphomethylpyrimidine synthase from Mycobacterium ulcerans (strain Agy99).